Consider the following 156-residue polypeptide: UPF0262 protein Jann_2882 (156 aa).

It belongs to the UPF0262 family.

The sequence is that of UPF0262 protein Jann_2882 from Jannaschia sp. (strain CCS1).